The primary structure comprises 289 residues: E3 ubiquitin-protein ligase MARCHF5 (289 aa).

The segment at 4–73 (VDEPPEKHCW…PQCGTEYRIV (70 aa)) adopts an RING-CH-type zinc-finger fold. Zn(2+)-binding residues include C12, C15, C31, C33, H41, C44, C63, and C66. 4 helical membrane-spanning segments follow: residues 97–117 (FAAAGVVVGTVYWSAVTYGAV), 137–157 (PLFLLMGLPTIPVMLVLGKMI), 202–222 (LSVSRTLCGALIFPSIANLVG), and 236–256 (TILGGIAFVVMKGVLKVYFKQ).

Its subcellular location is the mitochondrion outer membrane. It localises to the endoplasmic reticulum membrane. The enzyme catalyses S-ubiquitinyl-[E2 ubiquitin-conjugating enzyme]-L-cysteine + [acceptor protein]-L-lysine = [E2 ubiquitin-conjugating enzyme]-L-cysteine + N(6)-ubiquitinyl-[acceptor protein]-L-lysine.. It functions in the pathway protein modification; protein ubiquitination. Its function is as follows. Mitochondrial E3 ubiquitin-protein ligase that plays a crucial role in the control of mitochondrial morphology by acting as a positive regulator of mitochondrial fission. May play a role in the prevention of cell senescence acting as a regulator of mitochondrial quality control. In Danio rerio (Zebrafish), this protein is E3 ubiquitin-protein ligase MARCHF5 (marchf5).